A 414-amino-acid polypeptide reads, in one-letter code: Enterobactin exporter EntS (414 aa).

The Cytoplasmic portion of the chain corresponds to 1 to 21; the sequence is MNRQSWLLNLSLLKTHPAFRA. The chain crosses the membrane as a helical span at residues 22–42; it reads VFLARFISIVSLGLLGVAVPV. The Periplasmic segment spans residues 43 to 55; it reads QIQMMTHSTWQVG. The chain crosses the membrane as a helical span at residues 56–76; that stretch reads LSVTLTGGAMFIGLMVGGVLA. The Cytoplasmic segment spans residues 77 to 83; it reads DRYERKK. A helical membrane pass occupies residues 84-104; the sequence is VILLARGTCGIGFIGLCVNAL. Residues 105 to 109 lie on the Periplasmic side of the membrane; that stretch reads LPEPS. The helical transmembrane segment at 110–130 threads the bilayer; sequence LLAIYLLGLWDGFFASLGVTA. Over 131 to 156 the chain is Cytoplasmic; the sequence is LLAATPALVGRENLMQAGAITMLTVR. Residues 157 to 177 form a helical membrane-spanning segment; the sequence is LGSVISPMLGGILLASGGVAW. A topological domain (periplasmic) is located at residue Asn178. A helical transmembrane segment spans residues 179-199; sequence YGLAAAGTFITLLPLLTLPRL. Topologically, residues 200–218 are cytoplasmic; sequence PVPPQPRENPFIALLAAFR. Residues 219–239 form a helical membrane-spanning segment; it reads FLLASPLIGGIALLGGLVTMA. Topologically, residues 240–256 are periplasmic; the sequence is SAVRVLYPALAMSWQMS. Residues 257–277 traverse the membrane as a helical segment; sequence AAQIGLLYAAIPLGAAIGALT. The Cytoplasmic segment spans residues 278–287; it reads SGQLAHSVRP. The chain crosses the membrane as a helical span at residues 288–307; sequence GLIMLVSTVGSFLAVGLFAI. Over 308-313 the chain is Periplasmic; that stretch reads MPIWIA. A helical membrane pass occupies residues 314–336; that stretch reads GVICLALFGWLSAISSLLQYTLL. The Cytoplasmic portion of the chain corresponds to 337-356; that stretch reads QTQTPENMLGRMNGLWTAQN. A helical membrane pass occupies residues 357 to 377; it reads VTGDAIGAALLGGLGAMMTPV. A topological domain (periplasmic) is located at residue Ala378. Residues 379 to 399 form a helical membrane-spanning segment; that stretch reads SASVSGFGLVIIGLLLLLVLG. Residues 400 to 414 lie on the Cytoplasmic side of the membrane; the sequence is ELRRFRQTPPVSDAG.

The protein belongs to the major facilitator superfamily. EntS (TC 2.A.1.38) family.

It localises to the cell inner membrane. In terms of biological role, component of an export pathway for enterobactin. The chain is Enterobactin exporter EntS from Salmonella typhi.